A 340-amino-acid polypeptide reads, in one-letter code: tRNA N6-adenosine threonylcarbamoyltransferase (340 aa).

Residues histidine 111 and histidine 115 each coordinate Fe cation. Residues leucine 134–glycine 138, aspartate 167, glycine 180, and asparagine 276 contribute to the substrate site. Aspartate 304 is a binding site for Fe cation.

Belongs to the KAE1 / TsaD family. It depends on Fe(2+) as a cofactor.

The protein resides in the cytoplasm. The enzyme catalyses L-threonylcarbamoyladenylate + adenosine(37) in tRNA = N(6)-L-threonylcarbamoyladenosine(37) in tRNA + AMP + H(+). In terms of biological role, required for the formation of a threonylcarbamoyl group on adenosine at position 37 (t(6)A37) in tRNAs that read codons beginning with adenine. Is involved in the transfer of the threonylcarbamoyl moiety of threonylcarbamoyl-AMP (TC-AMP) to the N6 group of A37, together with TsaE and TsaB. TsaD likely plays a direct catalytic role in this reaction. The protein is tRNA N6-adenosine threonylcarbamoyltransferase of Helicobacter pylori (strain P12).